Here is a 305-residue protein sequence, read N- to C-terminus: Protoheme IX farnesyltransferase (305 aa).

Helical transmembrane passes span 26 to 46 (VMSLVVFTAFVGLWIAPQPVN), 47 to 67 (PFVAFCAVLFIALGGGASGAL), 98 to 118 (LAVGIALSGLSVMMLGLAANW), 119 to 139 (FAAGFLAFTIFFYAVVYTIWL), 147 to 167 (IVIGGAAGAFPPMIGWACATG), 174 to 194 (LLMFALIFFWTPPHFWALALF), 220 to 240 (IFAYTLVLAPFALWLGFTSVG), 243 to 263 (LYLAVSVVLNALFIAGGWQIL), and 284 to 304 (LSLYYTFLHFLALLVQHWVGG).

This sequence belongs to the UbiA prenyltransferase family. Protoheme IX farnesyltransferase subfamily. In terms of assembly, interacts with CtaA.

The protein resides in the cell inner membrane. It catalyses the reaction heme b + (2E,6E)-farnesyl diphosphate + H2O = Fe(II)-heme o + diphosphate. The protein operates within porphyrin-containing compound metabolism; heme O biosynthesis; heme O from protoheme: step 1/1. Functionally, converts heme B (protoheme IX) to heme O by substitution of the vinyl group on carbon 2 of heme B porphyrin ring with a hydroxyethyl farnesyl side group. The polypeptide is Protoheme IX farnesyltransferase (Paracoccus denitrificans (strain Pd 1222)).